The sequence spans 312 residues: MKASKRWVALAAATLTLFTATGTAQAANLIAIITPSHDNPFFKAEADTANARAKALGYDTIVLVHDDDANKQSNLVDTAIARGAKAIILDNAGSEASISAVRKAKAAGIPSFLIDREINATGIAVSQIVSNNYQGAQLGGRAFVKALGEKGNYVELVGREADINAGIRSKGYHDVIDQFPNMKMVERQSANWSQTEAYRVMETILQSHPDVKGVIAGNDTMAMGASAALKAAKRSDVIVVGFDGSNDVRDAIMRNDIRATVLQPAALAATEAVEQADKYMKTGSTGKPEKQLINCSLITKANAGKLDMFALR.

An N-terminal signal peptide occupies residues 1–26; sequence MKASKRWVALAAATLTLFTATGTAQA. D-apiofuranose contacts are provided by residues N39, 115 to 116, 162 to 164, R168, N218, D243, and Q263; these read DR and DIN.

The protein belongs to the bacterial solute-binding protein 2 family.

It is found in the periplasm. Functionally, part of an ABC transporter complex involved in D-apiose import. Binds D-apiose, D-ribose and D-ribulose. This Paraburkholderia graminis (strain ATCC 700544 / DSM 17151 / LMG 18924 / NCIMB 13744 / C4D1M) protein is D-apiose import binding protein.